The sequence spans 393 residues: MQLRKTLLVGLVSVALLSGCSLFNSEEDVVTMSPLPKVENQFSPTKVWSTSVGSGVGDYYSHLRPAWQGTSVFAADRKGLVKAMDADTGKQIWQTDLSEKTNFLSSNHSAMLSGGVTASGSHVYVGSEKAVVYALNAYDGQVAWQTVVAGEALSRPVVSDGVVLIHTSNGMLQALNESDGAIKWTLNLDTPALSLRGESAPAVAFGAAIVGGDNGRVSAVMMEQGQLIWQQRISQVTGATEIDRLNDIDITPVVVDGVVYALAYNGNLTALDLRSGQILWKREIGSVNDFIVDAGRIYLVDQNDRIIALKSDGGVTLWSQSDLLHRNLTAPVMYNGYLVVGDAEGYLHWVNTDDGRFVAQQSVDSSGFLSAPVVASDKLLIQARSGTVYAFTR.

An N-terminal signal peptide occupies residues 1–19 (MQLRKTLLVGLVSVALLSG). The N-palmitoyl cysteine moiety is linked to residue cysteine 20. Residue cysteine 20 is the site of S-diacylglycerol cysteine attachment.

This sequence belongs to the BamB family. In terms of assembly, part of the Bam complex, which is composed of the outer membrane protein BamA, and four lipoproteins BamB, BamC, BamD and BamE.

Its subcellular location is the cell outer membrane. Its function is as follows. Part of the outer membrane protein assembly complex, which is involved in assembly and insertion of beta-barrel proteins into the outer membrane. The protein is Outer membrane protein assembly factor BamB of Yersinia pestis.